A 1137-amino-acid polypeptide reads, in one-letter code: MINRDNKKAITKKGMISNRLNKFSIRKYTVGTASILVGTTLIFGLGNQEAKAAENTSTENAKQDEASASDNKEVVSETENNSTQKNDLTNPIKKETNTDSHQEAKEAPTTSSTQQQQNNATTSTETKPQNIEKENVKPSTDKTATEDTSVILEEKKAPNNTNNDVTTKPSTSEIQTTPTTPQESTNIENSQPQPTPSKVDNQVTDATNPKEPVNVSKEELKNNPEKLKELVRNDSNTDRSTKPVATAPTSVAPKRVNAKIRFAVAQPAAVASNNVNDLITVTKQMITEGIKDDGVIQAHDGEHIIYTSDFKIDNAVKAGDTMTVKYDKHTIPSDITDDFTPVDITDPSGEVIAKGTFDLNTKTITYKFTDYVDRYENVNAKLELNSYIDKKEVPNETNLNLTFATADKETSKNVKVEYQKPIVKDESNIQSIFSHLDTTKHEVEQTIYVNPLKLNAKNTNVTIKSGGVADNGDYYTGDGSTIIDSNTEIKVYKVASGQQLPQSNKIYDYSQYEDVTNSVTINKNYGTNMANINFGDIDSAYIVKVVSKYTPGAEDDLAVQQGVRMTTTNKYNYSSYAGYTNTILSTTDSGGGDGTVKPEEKLYKIGDYVWEDVDKDGVQGTDSKEKPMANVLVTLTYPDGTTKSVRTDANGHYEFGGLKDGETYTVKFETPAGYLPTKENGTTDGEKDSNGSSVTVKINGKDDMSLDTGFYKEPKYNLGDYVWEDTNKDGIQDANEPGIKDVKVTLKDSTGKVIGTTTTDASGKYKFTDLDNGNYTVEFETPAGYTPTVKNTTAEDKDSNGLTTTGVIKDADNWTLDSGFYKTPKYSLGDYVWYDSNKDGKQDSTEKGIKDVTVTLQNEKGEVIGTTKTDENGKYHFDNLDSGKYKVIFEKPAGLTQTGTNTTEDDKDADGGEVDVTITDHDDFTLDNGYFEEDTSDSDSDSDSDSDSDSDSDSDSDSDSDSDSDSDSDSDSDSDSDSDSDSDSDSDSDSDSDSDSDSDSDSDSDSDSDSDSDSDSDSDSDSDSDSDSDSDSDSDSDSDSDSDSDSDSDSDSDSDSDSDSDSDSDSDSDSDSDSDSDAGKHTPVKPMSATKDHHNKAKALPETGSENNGSNNATLFGGLFAALGSLLLFGRRKKQNK.

The first 52 residues, 1-52 (MINRDNKKAITKKGMISNRLNKFSIRKYTVGTASILVGTTLIFGLGNQEAKA), serve as a signal peptide directing secretion. Residues 53–601 (AENTSTENAK…GDGTVKPEEK (549 aa)) form a ligand binding A region region. 2 disordered regions span residues 54 to 249 (ENTS…TAPT) and 675 to 697 (LPTK…VTVK). A compositionally biased stretch (basic and acidic residues) spans 61 to 75 (AKQDEASASDNKEVV). A compositionally biased stretch (polar residues) spans 77–89 (ETENNSTQKNDLT). Positions 92–106 (IKKETNTDSHQEAKE) are enriched in basic and acidic residues. The segment covering 109-126 (TTSSTQQQQNNATTSTET) has biased composition (low complexity). Positions 130 to 145 (NIEKENVKPSTDKTAT) are enriched in basic and acidic residues. Residues 158–207 (PNNTNNDVTTKPSTSEIQTTPTTPQESTNIENSQPQPTPSKVDNQVTDAT) are compositionally biased toward polar residues. Positions 216 to 241 (SKEELKNNPEKLKELVRNDSNTDRST) are enriched in basic and acidic residues. CNA-B domains are found at residues 602-714 (LYKI…YKEP), 715-824 (KYNL…YKTP), and 825-935 (KYSL…EEDT). The disordered stretch occupies residues 896–1112 (TQTGTNTTED…TGSENNGSNN (217 aa)). Acidic residues-rich tracts occupy residues 903-913 (TEDDKDADGGE) and 930-1076 (YFEE…DSDS). The LPXTG sorting signal motif lies at 1100–1104 (LPETG). Pentaglycyl murein peptidoglycan amidated threonine is present on T1103. Residues 1104–1137 (GSENNGSNNATLFGGLFAALGSLLLFGRRKKQNK) constitute a propeptide, removed by sortase.

It belongs to the serine-aspartate repeat-containing protein (SDr) family.

The protein localises to the secreted. It is found in the cell wall. Its function is as follows. Specifically interacts with bone sialoprotein (BSP), a glycoprotein of bone and dentin extracellular matrix. Could contribute to staphylococcal osteomyelitis and arthritis. The polypeptide is Bone sialoprotein-binding protein (bbp) (Staphylococcus aureus (strain MRSA252)).